Consider the following 320-residue polypeptide: 1-aminocyclopropane-1-carboxylate oxidase 3 (320 aa).

Residues 154–254 (PNFGTKVSNY…RMSIASFYNP (101 aa)) form the Fe2OG dioxygenase domain. 3 residues coordinate Fe cation: histidine 178, aspartate 180, and histidine 235.

It belongs to the iron/ascorbate-dependent oxidoreductase family. It depends on Fe cation as a cofactor. In terms of tissue distribution, flowers.

It catalyses the reaction 1-aminocyclopropane-1-carboxylate + L-ascorbate + O2 = ethene + L-dehydroascorbate + hydrogen cyanide + CO2 + 2 H2O. The protein operates within alkene biosynthesis; ethylene biosynthesis via S-adenosyl-L-methionine; ethylene from S-adenosyl-L-methionine: step 2/2. The chain is 1-aminocyclopropane-1-carboxylate oxidase 3 (ACO3) from Cucumis melo (Muskmelon).